Reading from the N-terminus, the 283-residue chain is uncharacterized protein (283 aa).

The next 6 helical transmembrane spans lie at 28-48, 65-85, 113-133, 135-155, 200-220, and 246-266; these read LSSTSGAIGAIFGIILSILLI, LTSLIVASFGFLIALIIGFIL, LKRGFLYWIGNIILSIIFMIV, ILFIIFGVFLIFLPLVGIVFI, LNYIILLIIVGVIVIVINFVV, and IVDVISAVISAFVGFYTAVFA.

This sequence to M.jannaschii MJ0233.

It is found in the cell membrane. This is an uncharacterized protein from Methanocaldococcus jannaschii (strain ATCC 43067 / DSM 2661 / JAL-1 / JCM 10045 / NBRC 100440) (Methanococcus jannaschii).